The following is a 475-amino-acid chain: MTAVAQKIIENLKMQDEVRSSDIDAPYSEIHGALISLESRGICNVKMEESYEEVLTPEGEEVERSGSQEYLLLESIGEDGMSIEELERHSLGKMNAFRNKWIRREGNRVFRNVESIEDTVRNMVISMKRGTASAEEVEALRKRKLVSRRKKIVFIATKGPMFFDNTSYVTELTSEMVLDGSYRDLSFKHYNFNAEGNAPQCGSIHPLMKIREDFRRIFIELGFSEMATNQYVESSFWNFDALFQPQNHPSRDAHDTFFLLNPELSTDFPSDYLKEVGETHRGGKYNSLGYMSNWDIKEAQKNILRTHTTSVSARNLYRLAKKEFKPAKLFSIDKVFRNETVDATHLAEFHQVEGLVVGKGLNLTHLMGILREFFNRLGMGDIRFKPAFNPYTEPSMEVFGYHKGMDRWIEVGNSGVFRPEMLRPMGFDSDVSVVAWGLSLERPAMIKYGLKNIRELVGHKVDIEFSRKSEICFFD.

The interval 2–151 (TAVAQKIIEN…KRKLVSRRKK (150 aa)) is contains the major tRNA-Phe binding sites. L-phenylalanine-binding positions include Thr309, 351-353 (QVE), and Tyr391. Residue Glu393 coordinates Mg(2+). Phe417 serves as a coordination point for L-phenylalanine.

The protein belongs to the class-II aminoacyl-tRNA synthetase family. Phe-tRNA synthetase alpha subunit type 2 subfamily. As to quaternary structure, tetramer of two alpha and two beta subunits. It depends on Mg(2+) as a cofactor.

Its subcellular location is the cytoplasm. The catalysed reaction is tRNA(Phe) + L-phenylalanine + ATP = L-phenylalanyl-tRNA(Phe) + AMP + diphosphate + H(+). This Encephalitozoon cuniculi (strain GB-M1) (Microsporidian parasite) protein is Probable phenylalanine--tRNA ligase alpha subunit.